A 284-amino-acid chain; its full sequence is D-tagatose-1,6-bisphosphate aldolase subunit GatY (284 aa).

Catalysis depends on D82, which acts as the Proton donor. Residues H83 and H180 each contribute to the Zn(2+) site. A dihydroxyacetone phosphate-binding site is contributed by G181. H208 contributes to the Zn(2+) binding site. Dihydroxyacetone phosphate contacts are provided by residues 209-211 (GAS) and 230-233 (NVAT).

Belongs to the class II fructose-bisphosphate aldolase family. TagBP aldolase GatY subfamily. Forms a complex with GatZ. It depends on Zn(2+) as a cofactor.

It carries out the reaction D-tagatofuranose 1,6-bisphosphate = D-glyceraldehyde 3-phosphate + dihydroxyacetone phosphate. It participates in carbohydrate metabolism; D-tagatose 6-phosphate degradation; D-glyceraldehyde 3-phosphate and glycerone phosphate from D-tagatose 6-phosphate: step 2/2. Its function is as follows. Catalytic subunit of the tagatose-1,6-bisphosphate aldolase GatYZ, which catalyzes the reversible aldol condensation of dihydroxyacetone phosphate (DHAP or glycerone-phosphate) with glyceraldehyde 3-phosphate (G3P) to produce tagatose 1,6-bisphosphate (TBP). Requires GatZ subunit for full activity and stability. Is involved in the catabolism of galactitol. This chain is D-tagatose-1,6-bisphosphate aldolase subunit GatY, found in Escherichia coli O45:K1 (strain S88 / ExPEC).